The chain runs to 1007 residues: Protein vav-1 (1007 aa).

Residues 37–151 (CDLWIGCARW…TLSFLSHTKE (115 aa)) form the Calponin-homology (CH) domain. Residues 151 to 239 (ESLSRGVDPF…ENDLQNTPTL (89 aa)) are AC. A disordered region spans residues 153–176 (LSRGVDPFPDTDNNQEGTSNGSEF). A compositionally biased stretch (polar residues) spans 163–174 (TDNNQEGTSNGS). 3 positions are modified to phosphotyrosine: Tyr183, Tyr200, and Tyr217. Positions 240 to 437 (KRNRCIRELY…EDVCNYINEE (198 aa)) constitute a DH domain. Residues 470–598 (RVNLDGEVKM…WMTALLLSKS (129 aa)) enclose the PH domain. A Phorbol-ester/DAG-type zinc finger spans residues 610 to 664 (NHKVAFHSFRVDVKNPATCDVCDKLMKGLQYQGYKCESCNMSMHKECLGLKKCEA). An SH3 1 domain is found at 688 to 750 (HEGDIVVANS…HLDHVSQSRT (63 aa)). Positions 778–817 (LPNKLLSDGSSRSLSGPHGSRSSRNSSSSTINGSMDSVPR) are disordered. The segment covering 782-814 (LLSDGSSRSLSGPHGSRSSRNSSSSTINGSMDS) has biased composition (low complexity). Residues 831–925 (WYMGEMERAK…ALDTCLKNPY (95 aa)) form the SH2 domain. Positions 926–991 (SQCKVFKAVH…PLSYVKPYDP (66 aa)) constitute an SH3 2 domain.

In terms of processing, GEF activity is regulated by phosphorylation on tyrosine residues. As to expression, strong expression in the pharynx, proximal gonad, spermatheca, intestine and rectal epithelia.

In terms of biological role, acts as a guanine nucleotide exchange factor (GEF) for Rho GTPase. Has a critical roles in the generation of rhythmic behaviors: feeding, defecation and ovulation by dynamically regulating the concentration of intracellular calcium. Plays a role in male tail tip morphogenesis. The chain is Protein vav-1 from Caenorhabditis elegans.